The following is a 152-amino-acid chain: Transcriptional repressor NrdR (152 aa).

Residues 3-34 fold into a zinc finger; the sequence is CPFCHNEQSRVIDSRVIDSGTSIRRRRECAAC. One can recognise an ATP-cone domain in the interval 46-136; that stretch reads LSVVKRNGLA…VYKSFESADD (91 aa).

The protein belongs to the NrdR family. Requires Zn(2+) as cofactor.

In terms of biological role, negatively regulates transcription of bacterial ribonucleotide reductase nrd genes and operons by binding to NrdR-boxes. The chain is Transcriptional repressor NrdR from Corynebacterium aurimucosum (strain ATCC 700975 / DSM 44827 / CIP 107346 / CN-1) (Corynebacterium nigricans).